Reading from the N-terminus, the 349-residue chain is Acyl-CoA:acyl-CoA alkyltransferase (349 aa).

Catalysis depends on Glu-97, which acts as the Proton acceptor. Residue Cys-123 is the Acyl-thioester intermediate of the active site.

It belongs to the thiolase-like superfamily. OleA family.

It catalyses the reaction a 1,2-saturated acyl-CoA + an acyl-CoA + H2O = an (R)-2-alkyl-3-oxoalkanoate + 2 CoA + H(+). Its function is as follows. Involved in olefin biosynthesis. Catalyzes a non-decarboxylative head-to-head Claisen condensation of two acyl-CoA molecules, generating an (R)-2-alkyl-3-oxoalkanoate. The S.oneidensis oleABCD genes produce 3,6,9,12,15,19,22,25,28-hentriacontanonaene, which may aid the cells in adapting to a sudden drop in temperature. In Shewanella oneidensis (strain ATCC 700550 / JCM 31522 / CIP 106686 / LMG 19005 / NCIMB 14063 / MR-1), this protein is Acyl-CoA:acyl-CoA alkyltransferase.